Here is a 613-residue protein sequence, read N- to C-terminus: Chaperone protein DnaK (613 aa).

A disordered region spans residues 578–613 (MYQSQATQGTSQNSSQNNNSQNNNGDTVDADFKESK). Positions 580–602 (QSQATQGTSQNSSQNNNSQNNNG) are enriched in low complexity.

Belongs to the heat shock protein 70 family.

Acts as a chaperone. In Picrophilus torridus (strain ATCC 700027 / DSM 9790 / JCM 10055 / NBRC 100828 / KAW 2/3), this protein is Chaperone protein DnaK.